The sequence spans 1925 residues: Plexin-D1 (1925 aa).

The span at 1–21 (MARRAAGGAPPSARAAAAVPL) shows a compositional bias: low complexity. A disordered region spans residues 1 to 26 (MARRAAGGAPPSARAAAAVPLRPRPH). Residues 1-48 (MARRAAGGAPPSARAAAAVPLRPRPHSRGPGLLPLPLLLLLGAARAGA) form the signal peptide. In terms of domain architecture, Sema spans 49-548 (LEIQRRFPSP…TSHQMARVKV (500 aa)). The Extracellular portion of the chain corresponds to 49 to 1271 (LEIQRRFPSP…TLQLGGSETA (1223 aa)). Cystine bridges form between Cys106–Cys116 and Cys142–Cys150. N-linked (GlcNAc...) asparagine glycans are attached at residues Asn157 and Asn226. 2 cysteine pairs are disulfide-bonded: Cys324–Cys447 and Cys347–Cys391. N-linked (GlcNAc...) asparagine glycosylation occurs at Asn483. 5 cysteine pairs are disulfide-bonded: Cys551-Cys568, Cys557-Cys602, Cys560-Cys577, Cys571-Cys583, and Cys639-Cys663. 3 IPT/TIG domains span residues 893–977 (PEIR…SREQ), 983–1065 (PTVH…NLTF), and 1071–1145 (PVIT…FING). Asn967 is a glycosylation site (N-linked (GlcNAc...) asparagine). Asn1120 carries N-linked (GlcNAc...) asparagine glycosylation. Residues 1272-1292 (IVVSIVICSVLLLLSVVALFV) traverse the membrane as a helical segment. The Cytoplasmic segment spans residues 1293–1925 (FCTKSRRAER…NNIYECYSEA (633 aa)).

The protein belongs to the plexin family. As to quaternary structure, interacts with NRP1 and SEMA4A. Interacts with SH3BP1; they dissociate upon SEMA3E binding to PLXND1 allowing SH3BP1 to transduce downstream signal through RAC1 inactivation. Detected in embryonic heart and vascular endothelium, brain, dorsal root ganglia, adrenal gland, lung mesenchyme, small intestine and in the ossification centers of vertebral bodies.

Its subcellular location is the cell membrane. The protein resides in the cell projection. It is found in the lamellipodium membrane. Its function is as follows. Cell surface receptor for SEMA4A and for class 3 semaphorins, such as SEMA3A, SEMA3C and SEMA3E. Plays an important role in cell-cell signaling, and in regulating the migration of a wide spectrum of cell types. Regulates the migration of thymocytes in the medulla. Regulates endothelial cell migration. Plays an important role in ensuring the specificity of synapse formation. Mediates anti-angiogenic signaling in response to SEMA3E. Required for normal development of the heart and vasculature. The chain is Plexin-D1 (Plxnd1) from Mus musculus (Mouse).